Consider the following 305-residue polypeptide: tRNA pseudouridine synthase B (305 aa).

Asp-48 (nucleophile) is an active-site residue.

It belongs to the pseudouridine synthase TruB family. Type 1 subfamily.

The catalysed reaction is uridine(55) in tRNA = pseudouridine(55) in tRNA. Responsible for synthesis of pseudouridine from uracil-55 in the psi GC loop of transfer RNAs. The protein is tRNA pseudouridine synthase B of Pseudomonas putida (strain GB-1).